The chain runs to 428 residues: Chaperone SurA (428 aa).

The first 13 residues, 1 to 13 (MLGALLLSGAVHA), serve as a signal peptide directing secretion. PpiC domains are found at residues 164-265 (SEEF…KLLE) and 276-375 (RDEV…EVLG).

Its subcellular location is the periplasm. The enzyme catalyses [protein]-peptidylproline (omega=180) = [protein]-peptidylproline (omega=0). Chaperone involved in the correct folding and assembly of outer membrane proteins. Recognizes specific patterns of aromatic residues and the orientation of their side chains, which are found more frequently in integral outer membrane proteins. May act in both early periplasmic and late outer membrane-associated steps of protein maturation. The sequence is that of Chaperone SurA from Pseudomonas syringae pv. tomato (strain ATCC BAA-871 / DC3000).